The primary structure comprises 279 residues: Presqualene diphosphate synthase (279 aa).

The protein belongs to the phytoene/squalene synthase family. HpnD subfamily.

It catalyses the reaction 2 (2E,6E)-farnesyl diphosphate = presqualene diphosphate + diphosphate. It functions in the pathway secondary metabolite biosynthesis; hopanoid biosynthesis. Its function is as follows. Involved in the biosynthesis of the hopanoid precursor squalene (SQ) from farnesyl diphosphate (FPP). Catalyzes the first step, the formation of presqualene diphosphate (PSPP) from two molecules of FPP. In Rhodopseudomonas palustris (strain ATCC BAA-98 / CGA009), this protein is Presqualene diphosphate synthase.